Here is a 465-residue protein sequence, read N- to C-terminus: UDP-N-acetylmuramate--L-alanine ligase (465 aa).

112–118 (GTHGKTT) provides a ligand contact to ATP.

It belongs to the MurCDEF family.

The protein resides in the cytoplasm. It carries out the reaction UDP-N-acetyl-alpha-D-muramate + L-alanine + ATP = UDP-N-acetyl-alpha-D-muramoyl-L-alanine + ADP + phosphate + H(+). It participates in cell wall biogenesis; peptidoglycan biosynthesis. Cell wall formation. The sequence is that of UDP-N-acetylmuramate--L-alanine ligase from Burkholderia pseudomallei (strain 1106a).